The sequence spans 137 residues: Ribosome-binding factor A (137 aa).

Belongs to the RbfA family. In terms of assembly, monomer. Binds 30S ribosomal subunits, but not 50S ribosomal subunits or 70S ribosomes.

It is found in the cytoplasm. Its function is as follows. One of several proteins that assist in the late maturation steps of the functional core of the 30S ribosomal subunit. Associates with free 30S ribosomal subunits (but not with 30S subunits that are part of 70S ribosomes or polysomes). Required for efficient processing of 16S rRNA. May interact with the 5'-terminal helix region of 16S rRNA. This Rhodopseudomonas palustris (strain TIE-1) protein is Ribosome-binding factor A.